We begin with the raw amino-acid sequence, 564 residues long: Benomyl/methotrexate resistance protein (564 aa).

The segment at 60-101 (IDNQGEPNSSQSSSSNNTIVDNNNNNNNDVDGDKIVVTWDGD) is disordered. Low complexity predominate over residues 67–88 (NSSQSSSSNNTIVDNNNNNNND). 12 helical membrane passes run 116–136 (AFFIFQISFLTTSVYMGSAVY), 153–173 (VATLPLTLFVIGYGVGPLVFS), 184–204 (TSIYIITLFLFVILQIPTALV), 210–229 (LCILRFLGGFFASPCLATGG), 241–262 (LPVGLAAWSLGAVCGPSFGPFF), 274–294 (WTFWFMCIISGFSFVMLCFTL), 358–374 (IYIAMVYSILYLFFEVF), 393–411 (YMSIVIGIVIAAFIYIPVI), 431–451 (IPIAIVGGILLTSGLFIFGWS), 457–476 (HWVGPLFGAATTASGAFLIF), 489–506 (PHYIASVFASNDLFRSVI), and 530–551 (WGSSVLGFITLVMIAIPVLFYL).

This sequence belongs to the major facilitator superfamily. CAR1 family.

The protein localises to the membrane. Functionally, probable transporter. Confers resistance to benomyl and methotrexate. The sequence is that of Benomyl/methotrexate resistance protein (MDR1) from Candida albicans (Yeast).